A 291-amino-acid chain; its full sequence is Flavin-dependent thymidylate synthase (291 aa).

The region spanning 31–241 (GFVRVVDYMG…PMVHAAFVEY (211 aa)) is the ThyX domain. FAD contacts are provided by residues serine 77, 100 to 102 (RHR), and glutamate 108. DUMP is bound by residues 97–100 (QWVR), 108–112 (EYSAR), and arginine 180. Positions 100–110 (RHRTASINEYS) match the ThyX motif motif. 196–198 (NLH) is an FAD binding site. Position 207 (arginine 207) interacts with dUMP. Catalysis depends on arginine 207, which acts as the Involved in ionization of N3 of dUMP, leading to its activation.

The protein belongs to the thymidylate synthase ThyX family. Homotetramer. It depends on FAD as a cofactor.

It carries out the reaction dUMP + (6R)-5,10-methylene-5,6,7,8-tetrahydrofolate + NADPH + H(+) = dTMP + (6S)-5,6,7,8-tetrahydrofolate + NADP(+). It functions in the pathway pyrimidine metabolism; dTTP biosynthesis. Its function is as follows. Catalyzes the reductive methylation of 2'-deoxyuridine-5'-monophosphate (dUMP) to 2'-deoxythymidine-5'-monophosphate (dTMP) while utilizing 5,10-methylenetetrahydrofolate (mTHF) as the methyl donor, and NADPH and FADH(2) as the reductant. This is Flavin-dependent thymidylate synthase from Anaplasma marginale (strain St. Maries).